A 299-amino-acid polypeptide reads, in one-letter code: Taste receptor type 2 member 4 (299 aa).

At 1–9 (MLQLFYFSA) the chain is on the extracellular side. Residues 10–30 (IIASVILNFVGIIMNLFIMVV) traverse the membrane as a helical segment. Residues 31–46 (NCKTWVKSHRISSSDR) are Cytoplasmic-facing. Residues 47 to 67 (ILFSLGITRFLMLGLFLVNTI) form a helical membrane-spanning segment. At 68-81 (FFVSSNTERSVYLS) the chain is on the extracellular side. The chain crosses the membrane as a helical span at residues 82-102 (AFFVLCFMFXDSSSLWFVTLL). Residues 103–131 (NILYCVKITNFQHSVFLLLKQNISPKIPR) are Cytoplasmic-facing. The chain crosses the membrane as a helical span at residues 132-152 (LLLACVLISAFTTCLYITLSQ). The Extracellular portion of the chain corresponds to 153 to 172 (ASPFPELVTKRNNTSFNTHE). N164 and N165 each carry an N-linked (GlcNAc...) asparagine glycan. Residues 173–193 (GILSLVVSLVLSSSLQFIINV) traverse the membrane as a helical segment. Topologically, residues 194–230 (TSASLLIHSLRRHIQKMQKNATGFWNPQTEAHVGAMK) are cytoplasmic. Residues 231–251 (LMIYFLILYIPYSVATLVQYL) traverse the membrane as a helical segment. Residues 252 to 262 (PFYVGMDMGTK) lie on the Extracellular side of the membrane. Residues 263-283 (AICLIFATLYSPGHSVLIIIT) traverse the membrane as a helical segment. Residues 284–299 (HPKLKTTAKKILCFKK) are Cytoplasmic-facing.

It belongs to the G-protein coupled receptor T2R family.

The protein resides in the membrane. Its subcellular location is the cell projection. It localises to the cilium membrane. In terms of biological role, gustducin-coupled receptor implicated in the perception of bitter compounds in the oral cavity and the gastrointestinal tract. Signals through PLCB2 and the calcium-regulated cation channel TRPM5. In airway epithelial cells, binding of denatonium increases the intracellular calcium ion concentration and stimulates ciliary beat frequency. This chain is Taste receptor type 2 member 4 (TAS2R4), found in Pongo pygmaeus (Bornean orangutan).